A 544-amino-acid polypeptide reads, in one-letter code: CTP synthase (544 aa).

The amidoligase domain stretch occupies residues 1-267 (MSKFIFVTGG…GDLLVSRLHL (267 aa)). Ser13 is a CTP binding site. Ser13 serves as a coordination point for UTP. 14-19 (SVGKGI) is an ATP binding site. Tyr54 lines the L-glutamine pocket. ATP is bound at residue Asp71. Positions 71 and 141 each coordinate Mg(2+). CTP-binding positions include 148–150 (DIE), 188–193 (KTKPTQ), and Lys224. UTP-binding positions include 188–193 (KTKPTQ) and Lys224. Residues 299 to 534 (YVELKDAYYS…INAAKKVIRD (236 aa)) enclose the Glutamine amidotransferase type-1 domain. Gly354 provides a ligand contact to L-glutamine. The Nucleophile; for glutamine hydrolysis role is filled by Cys381. L-glutamine contacts are provided by residues 382 to 385 (LGMQ), Glu405, and Arg462. Active-site residues include His507 and Glu509.

This sequence belongs to the CTP synthase family. As to quaternary structure, homotetramer.

The catalysed reaction is UTP + L-glutamine + ATP + H2O = CTP + L-glutamate + ADP + phosphate + 2 H(+). The enzyme catalyses L-glutamine + H2O = L-glutamate + NH4(+). It carries out the reaction UTP + NH4(+) + ATP = CTP + ADP + phosphate + 2 H(+). The protein operates within pyrimidine metabolism; CTP biosynthesis via de novo pathway; CTP from UDP: step 2/2. With respect to regulation, allosterically activated by GTP, when glutamine is the substrate; GTP has no effect on the reaction when ammonia is the substrate. The allosteric effector GTP functions by stabilizing the protein conformation that binds the tetrahedral intermediate(s) formed during glutamine hydrolysis. Inhibited by the product CTP, via allosteric rather than competitive inhibition. Functionally, catalyzes the ATP-dependent amination of UTP to CTP with either L-glutamine or ammonia as the source of nitrogen. Regulates intracellular CTP levels through interactions with the four ribonucleotide triphosphates. The sequence is that of CTP synthase from Dehalococcoides mccartyi (strain ATCC BAA-2100 / JCM 16839 / KCTC 5957 / BAV1).